A 220-amino-acid chain; its full sequence is Histone deacetylase complex subunit SAP30 (220 aa).

The tract at residues 1–129 (MNGFTPEEMS…QSVRNRRKRK (129 aa)) is interaction with NCOR1. The residue at position 5 (Thr-5) is a Phosphothreonine. An Atypical zinc finger spans residues 67 to 115 (CCLREDGERCGRAAGNASFSKRIQKSISQKKVKIELDKSARHLYICDYH). Lys-87 is covalently cross-linked (Glycyl lysine isopeptide (Lys-Gly) (interchain with G-Cter in SUMO2)). The tract at residues 123–143 (RNRRKRKGSDDDGGDSPVQDI) is disordered. The interaction with SIN3A stretch occupies residues 130-220 (GSDDDGGDSP…SDLKADSGVH (91 aa)). 2 positions are modified to phosphoserine: Ser-131 and Ser-138. Thr-145 carries the phosphothreonine modification. Residues Lys-194 and Lys-214 each participate in a glycyl lysine isopeptide (Lys-Gly) (interchain with G-Cter in SUMO2) cross-link.

It belongs to the SAP30 family. Component of the histone deacetylase complex that includes at least SIN3A, HDAC1 and HDAC2. Found in a complex composed of at least SINHCAF, SIN3A, HDAC1, SAP30, RBBP4, OGT and TET1. Interacts with HDAC1. Interacts with SIN3A, SIN3B, HDAC2, RBBP4 and NCOR1. Interacts directly with SAMSN1. Interacts with HCFC1. Interacts with SAP30BP.

It localises to the nucleus. Its function is as follows. Involved in the functional recruitment of the Sin3-histone deacetylase complex (HDAC) to a specific subset of N-CoR corepressor complexes. Capable of transcription repression by N-CoR. Active in deacetylating core histone octamers (when in a complex) but inactive in deacetylating nucleosomal histones. This Mus musculus (Mouse) protein is Histone deacetylase complex subunit SAP30.